The sequence spans 188 residues: Ion-translocating oxidoreductase complex subunit B (188 aa).

A hydrophobic region spans residues 1-23; sequence MIEAAVSMSALGLGLGLLLGVAA. The 60-residue stretch at 29-88 folds into the 4Fe-4S domain; that stretch reads ESPPILDAIEGILPGTNCGACGYPGCRGLAEAMSEGAAPVTACAPGGRDVALALAAIVET. Residues Cys-46, Cys-49, Cys-54, Cys-71, Cys-113, Cys-116, Cys-119, Cys-123, Cys-143, Cys-146, Cys-149, and Cys-153 each contribute to the [4Fe-4S] cluster site. 4Fe-4S ferredoxin-type domains follow at residues 104–133 and 134–163; these read TVAF…GANR and QIHT…ARVK.

This sequence belongs to the 4Fe4S bacterial-type ferredoxin family. RnfB subfamily. As to quaternary structure, the complex is composed of six subunits: RnfA, RnfB, RnfC, RnfD, RnfE and RnfG. [4Fe-4S] cluster is required as a cofactor.

The protein resides in the cellular chromatophore membrane. Part of a membrane-bound complex that couples electron transfer with translocation of ions across the membrane. This Cereibacter sphaeroides (strain ATCC 17029 / ATH 2.4.9) (Rhodobacter sphaeroides) protein is Ion-translocating oxidoreductase complex subunit B.